We begin with the raw amino-acid sequence, 386 residues long: Probable magnesium transporter NIPA5 (386 aa).

The Extracellular portion of the chain corresponds to 1 to 18 (MVYSSGSWRDAYKGMSSD). A helical transmembrane segment spans residues 19–39 (NVKGLVLALSSSIFIGASFIV). Residues 40 to 61 (KKKGLKKAGASGLRAGSGGYSY) lie on the Cytoplasmic side of the membrane. 2 consecutive transmembrane segments (helical) span residues 62-82 (LLEP…IANF) and 83-103 (AAYA…SIII). Topologically, residues 104-115 (SASLAHIILQEK) are cytoplasmic. Residues 116 to 136 (LHTFGILGCALCIVGSVTIVL) form a helical membrane-spanning segment. The Extracellular segment spans residues 137 to 157 (HAPQEQDIVSVLEVWNLATEP). A helical membrane pass occupies residues 158–178 (AFLFYAAAVVGAAIVLIVQFI). The Cytoplasmic portion of the chain corresponds to 179–189 (PLYGQSHVMVY). Residues 190–210 (IGVCSLIGSLSVMSVKALGIA) form a helical membrane-spanning segment. The Extracellular segment spans residues 211-220 (LKLTFSGTNQ). Residues 221–241 (LGYPQTWVFTVIVLFCVITQM) form a helical membrane-spanning segment. Residues 242 to 255 (NYLNKALDTFNTAV) are Cytoplasmic-facing. A helical membrane pass occupies residues 256-276 (VSPIYYVMFTSLTILASVIMF). Topologically, residues 277–283 (KDWDRQS) are extracellular. Residues 284–304 (GTQIMTELCGFVTILSGTFLL) form a helical membrane-spanning segment. At 305–386 (HTTTDMVDGE…LRRQESSLRS (82 aa)) the chain is on the cytoplasmic side. The interval 352–386 (RQESAKSPRPARQNKQLEDDLEAVPLRRQESSLRS) is disordered. The segment covering 376 to 386 (PLRRQESSLRS) has biased composition (basic and acidic residues).

This sequence belongs to the NIPA (TC 2.A.7) family. Homodimer.

It is found in the cell membrane. The protein localises to the early endosome. Its function is as follows. Acts as a Mg(2+) transporter. Can also transport other divalent cations such as Fe(2+), Sr(2+), Ba(2+), Mn(2+) and Co(2+) but to a much less extent than Mg(2+). The protein is Probable magnesium transporter NIPA5 of Arabidopsis thaliana (Mouse-ear cress).